The primary structure comprises 459 residues: mRNA-capping enzyme subunit alpha (459 aa).

K70 acts as the N6-GMP-lysine intermediate in catalysis. A disordered region spans residues 415–459 (MAGGSGRPLPSQSQNATLSTSKPVHSQPPSNDKEPKYVDEDDWSD). Residues 424-444 (PSQSQNATLSTSKPVHSQPPS) show a composition bias toward polar residues.

It belongs to the eukaryotic GTase family. Heterodimer. The mRNA-capping enzyme is composed of two separate chains alpha and beta, respectively a mRNA guanylyltransferase and an mRNA 5'-triphosphate monophosphatase.

It is found in the nucleus. It carries out the reaction a 5'-end diphospho-ribonucleoside in mRNA + GTP + H(+) = a 5'-end (5'-triphosphoguanosine)-ribonucleoside in mRNA + diphosphate. Functionally, second step of mRNA capping. Transfer of the GMP moiety of GTP to the 5'-diphosphate terminus of RNA via a covalent enzyme-GMP reaction intermediate. The sequence is that of mRNA-capping enzyme subunit alpha (CEG1) from Saccharomyces cerevisiae (strain ATCC 204508 / S288c) (Baker's yeast).